The following is a 360-amino-acid chain: Photosystem II protein D1 (360 aa).

3 consecutive transmembrane segments (helical) span residues 29-46, 118-133, and 142-156; these read YIGW…SAIA, HFLI…EWEL, and WICV…AATA. His-118 provides a ligand contact to chlorophyll a. Tyr-126 is a binding site for pheophytin a. 2 residues coordinate [CaMn4O5] cluster: Asp-170 and Glu-189. A helical transmembrane segment spans residues 197–218; it reads FHMLGVAGVFGGSLFSAMHGSL. His-198 lines the chlorophyll a pocket. A quinone contacts are provided by residues His-215 and 264–265; that span reads SF. His-215 serves as a coordination point for Fe cation. Residue His-272 coordinates Fe cation. The chain crosses the membrane as a helical span at residues 274-288; the sequence is FLAAWPVIGIWFTAL. Residues His-332, Glu-333, Asp-342, and Ala-344 each coordinate [CaMn4O5] cluster. Residues 345–360 constitute a propeptide that is removed on maturation; the sequence is AGDVAPVALTAPPING.

This sequence belongs to the reaction center PufL/M/PsbA/D family. As to quaternary structure, PSII is composed of 1 copy each of membrane proteins PsbA, PsbB, PsbC, PsbD, PsbE, PsbF, PsbH, PsbI, PsbJ, PsbK, PsbL, PsbM, PsbT, PsbX, PsbY, PsbZ, Psb30/Ycf12, peripheral proteins PsbO, CyanoQ (PsbQ), PsbU, PsbV and a large number of cofactors. It forms dimeric complexes. Requires The D1/D2 heterodimer binds P680, chlorophylls that are the primary electron donor of PSII, and subsequent electron acceptors. It shares a non-heme iron and each subunit binds pheophytin, quinone, additional chlorophylls, carotenoids and lipids. D1 provides most of the ligands for the Mn4-Ca-O5 cluster of the oxygen-evolving complex (OEC). There is also a Cl(-1) ion associated with D1 and D2, which is required for oxygen evolution. The PSII complex binds additional chlorophylls, carotenoids and specific lipids. as cofactor. Post-translationally, tyr-161 forms a radical intermediate that is referred to as redox-active TyrZ, YZ or Y-Z. C-terminally processed by CtpA; processing is essential to allow assembly of the oxygen-evolving complex and thus photosynthetic growth.

Its subcellular location is the cellular thylakoid membrane. The catalysed reaction is 2 a plastoquinone + 4 hnu + 2 H2O = 2 a plastoquinol + O2. Functionally, photosystem II (PSII) is a light-driven water:plastoquinone oxidoreductase that uses light energy to abstract electrons from H(2)O, generating O(2) and a proton gradient subsequently used for ATP formation. It consists of a core antenna complex that captures photons, and an electron transfer chain that converts photonic excitation into a charge separation. The D1/D2 (PsbA/PsbD) reaction center heterodimer binds P680, the primary electron donor of PSII as well as several subsequent electron acceptors. The chain is Photosystem II protein D1 from Trichormus azollae (Anabaena azollae).